The sequence spans 64 residues: Epidermal growth factor (64 aa).

The signal sequence occupies residues 1–21 (MMRHLLLVGAAILIFVSDAQA). Gln-22 is subject to Pyrrolidone carboxylic acid. One can recognise an EGF-like domain in the interval 25–61 (GEDPCQIVRCSYGANCIAYGDTAICECPFGYSGIRCQ). 3 cysteine pairs are disulfide-bonded: Cys-29–Cys-40, Cys-34–Cys-49, and Cys-51–Cys-60.

As to expression, albumen gland. Up-regulated in adult CNS after axotomy.

The protein localises to the secreted. In terms of biological role, induces neurite outgrowth in specific adult neurons in vitro. This Lymnaea stagnalis (Great pond snail) protein is Epidermal growth factor.